The sequence spans 231 residues: U1 small nuclear ribonucleoprotein C-1 (231 aa).

The segment at 4 to 36 adopts a Matrin-type zinc-finger fold; sequence YYCDYCDTYLTHDSPSVRKQHNAGYKHKANVRT. Composition is skewed to pro residues over residues 117 to 127, 134 to 159, and 167 to 178; these read APGIPGYPGGP, GAPP…PPGS, and LPRPPTLPPPTS. The tract at residues 117–231 is disordered; the sequence is APGIPGYPGG…SYAQPSEGNH (115 aa). Positions 181 to 193 are enriched in low complexity; the sequence is PGAPIPNSAAPPA. The span at 199-217 shows a compositional bias: pro residues; the sequence is PPAPAGPTSGAPPAPPTAP.

This sequence belongs to the U1 small nuclear ribonucleoprotein C family. U1 snRNP is composed of the 7 core Sm proteins B/B', D1, D2, D3, E, F and G that assemble in a heptameric protein ring on the Sm site of the small nuclear RNA to form the core snRNP, and at least 3 U1 snRNP-specific proteins U1-70K, U1-A and U1-C. U1-C interacts with U1 snRNA and the 5' splice-site region of the pre-mRNA.

It localises to the nucleus. Its function is as follows. Component of the spliceosomal U1 snRNP, which is essential for recognition of the pre-mRNA 5' splice-site and the subsequent assembly of the spliceosome. U1-C is directly involved in initial 5' splice-site recognition for both constitutive and regulated alternative splicing. The interaction with the 5' splice-site seems to precede base-pairing between the pre-mRNA and the U1 snRNA. Stimulates commitment or early (E) complex formation by stabilizing the base pairing of the 5' end of the U1 snRNA and the 5' splice-site region. This chain is U1 small nuclear ribonucleoprotein C-1, found in Sorghum bicolor (Sorghum).